The following is a 1149-amino-acid chain: ATP-dependent helicase/deoxyribonuclease subunit B (1149 aa).

8-15 serves as a coordination point for ATP; that stretch reads GRAGSGKS. Cysteine 788, cysteine 1106, cysteine 1109, and cysteine 1115 together coordinate [4Fe-4S] cluster.

The protein belongs to the helicase family. AddB/RexB type 1 subfamily. In terms of assembly, heterodimer of AddA and AddB. It depends on Mg(2+) as a cofactor. Requires [4Fe-4S] cluster as cofactor.

In terms of biological role, the heterodimer acts as both an ATP-dependent DNA helicase and an ATP-dependent, dual-direction single-stranded exonuclease. Recognizes the chi site generating a DNA molecule suitable for the initiation of homologous recombination. The AddB subunit has 5' -&gt; 3' nuclease activity but not helicase activity. The chain is ATP-dependent helicase/deoxyribonuclease subunit B from Ruminiclostridium cellulolyticum (strain ATCC 35319 / DSM 5812 / JCM 6584 / H10) (Clostridium cellulolyticum).